Consider the following 197-residue polypeptide: MSLSIDVTSLPSISSSIFKNESSSTTSTLSGKSIGRNEQYVSSDIEAFNKYMLSKSLEDIGPSDSASNDPLTSFSIRSNAVKTNADAGVSMDSSTQSRPSSNVGCDQMDFSLTKGINVSASLDSCVSISTNHKKEKSKKDKSRKHYPRIEADSDSEDYVLDDSDSDDGKCKNCKYKKKYFALRMRMKQVAMQLIEDL.

Phosphoserine; by host CK1 is present on serine 67. Aspartate 92 is a binding site for Mg(2+). The segment at 130-167 (TNHKKEKSKKDKSRKHYPRIEADSDSEDYVLDDSDSDD) is disordered. The span at 131–146 (NHKKEKSKKDKSRKHY) shows a compositional bias: basic residues. Positions 152–165 (DSDSEDYVLDDSDS) are enriched in acidic residues. Residues serine 153, serine 155, serine 163, and serine 165 each carry the phosphoserine; by host modification.

It belongs to the rotavirus NSP5 family. As to quaternary structure, homodimer. Interacts with VP1. Interacts with VP2. Interacts with NSP2; this interaction leads to up-regulation of NSP5 hyperphosphorylation and formation of virus factories. Interacts with NSP6. Participates in the selective exclusion of host proteins from stress granules (SG) and P bodies (PB). Also participates in the sequestration of these remodeled organelles in viral factories. Mg(2+) is required as a cofactor. Post-translationally, O-glycosylated. Hyperphosphorylated on serine residues, when in dimeric form. Phosphorylation by host CK1 is required for the hyperphosphorylation of NSP5 dimer.

The protein localises to the host cytoplasm. In terms of biological role, plays an essential role in the viral genome replication. Participates, together with NSP2, in the formation of viral factories (viroplasms), which are large inclusions in the host cytoplasm where replication intermediates are assembled and viral RNA replication takes place. Orchestrates the recruitment of viroplasmic proteins such as capsid proteins to these factories. Participates in the selective exclusion of host proteins from stress granules (SG) and P bodies (PB). Also participates in the sequestration of these remodeled organelles in viral factories. The sequence is that of Non-structural protein 5 from Homo sapiens (Human).